Consider the following 122-residue polypeptide: S-adenosylmethionine decarboxylase proenzyme (122 aa).

S69 functions as the Schiff-base intermediate with substrate; via pyruvic acid in the catalytic mechanism. A Pyruvic acid (Ser); by autocatalysis modification is found at S69. The active-site Proton acceptor; for processing activity is H74. C89 acts as the Proton donor; for catalytic activity in catalysis.

This sequence belongs to the prokaryotic AdoMetDC family. Type 1 subfamily. In terms of assembly, heterotetramer of two alpha and two beta chains arranged as a dimer of alpha/beta heterodimers. The cofactor is pyruvate. In terms of processing, is synthesized initially as an inactive proenzyme. Formation of the active enzyme involves a self-maturation process in which the active site pyruvoyl group is generated from an internal serine residue via an autocatalytic post-translational modification. Two non-identical subunits are generated from the proenzyme in this reaction, and the pyruvate is formed at the N-terminus of the alpha chain, which is derived from the carboxyl end of the proenzyme. The post-translation cleavage follows an unusual pathway, termed non-hydrolytic serinolysis, in which the side chain hydroxyl group of the serine supplies its oxygen atom to form the C-terminus of the beta chain, while the remainder of the serine residue undergoes an oxidative deamination to produce ammonia and the pyruvoyl group blocking the N-terminus of the alpha chain.

The enzyme catalyses S-adenosyl-L-methionine + H(+) = S-adenosyl 3-(methylsulfanyl)propylamine + CO2. The protein operates within amine and polyamine biosynthesis; S-adenosylmethioninamine biosynthesis; S-adenosylmethioninamine from S-adenosyl-L-methionine: step 1/1. In terms of biological role, catalyzes the decarboxylation of S-adenosylmethionine to S-adenosylmethioninamine (dcAdoMet), the propylamine donor required for the synthesis of the polyamines spermine and spermidine from the diamine putrescine. This is S-adenosylmethionine decarboxylase proenzyme from Saccharolobus islandicus (strain L.S.2.15 / Lassen #1) (Sulfolobus islandicus).